Reading from the N-terminus, the 70-residue chain is Large ribosomal subunit protein eL38 (70 aa).

K4 participates in a covalent cross-link: Glycyl lysine isopeptide (Lys-Gly) (interchain with G-Cter in SUMO2). The residue at position 9 (K9) is an N6-acetyllysine; alternate. K9 participates in a covalent cross-link: Glycyl lysine isopeptide (Lys-Gly) (interchain with G-Cter in SUMO2); alternate. N6-acetyllysine is present on K67.

The protein belongs to the eukaryotic ribosomal protein eL38 family. As to quaternary structure, component of the large ribosomal subunit.

It localises to the cytoplasm. Its function is as follows. Component of the large ribosomal subunit. The ribosome is a large ribonucleoprotein complex responsible for the synthesis of proteins in the cell. The sequence is that of Large ribosomal subunit protein eL38 (RPL38) from Macaca fascicularis (Crab-eating macaque).